The primary structure comprises 132 residues: MTFTNKEKNCKQSKSLAALMTKFKRSQLILKHQANNIALELWNENDINLSKQLIELIEDTFSMLKKETVDFIYDIYIYGKKPCDIGYSNSTYYKKLNKAANSFFDHFVWDSSILDKRIITNGSNSQRTTNSK.

This is an uncharacterized protein from Mycoplasma genitalium (strain ATCC 33530 / DSM 19775 / NCTC 10195 / G37) (Mycoplasmoides genitalium).